Consider the following 1627-residue polypeptide: Pleckstrin homology domain-containing family G member 4B (1627 aa).

6 disordered regions span residues 211–349 (YSSC…VQPR), 381–475 (LTGA…GQAV), 501–537 (VSTD…GTGD), 959–1008 (SEAA…PAQP), 1049–1111 (TTAH…SKGL), and 1124–1159 (PLWQ…QVGS). Over residues 241 to 251 (GSASCPDTLTS) the composition is skewed to polar residues. Basic and acidic residues-rich tracts occupy residues 262–273 (QLRHLPYPERAE) and 310–322 (ERPD…DRPK). Positions 465–474 (RPGGHLGGQA) are enriched in gly residues. A compositionally biased stretch (basic and acidic residues) spans 975 to 985 (PKHERAQEAMR). A compositionally biased stretch (polar residues) spans 1057–1068 (SACSSEPTQTLA). The segment covering 1070–1081 (RPRKHPQKKMIK) has biased composition (basic residues). 2 stretches are compositionally biased toward polar residues: residues 1101–1111 (PDHTSVFSKGL) and 1133–1144 (PVTQSRSLSSPS). Residues 1161–1340 (RLRHIMAEMI…CFQLRHGNDL (180 aa)) form the DH domain. The PH domain maps to 1352 to 1460 (NLKEQGQLRC…WTDVIGRILW (109 aa)). The tract at residues 1519–1558 (KGTESQMRGSTAVSSSDHAAPFKRPHSTISDSSTSSSSSQ) is disordered. Residues 1521–1535 (TESQMRGSTAVSSSD) are compositionally biased toward polar residues. The segment covering 1545 to 1558 (STISDSSTSSSSSQ) has biased composition (low complexity).

In terms of assembly, found in a complex with ARHGEF11 and ARHGEF12; binding to ARHGEF11 and ARHGEF12 enhances CDC42 GEF activity of PLEKHG4B, and PLEKHG4B, in turn, inhibits ARHGEF11- and ARHGEF12-mediated RHOA activation. Interacts with ANXA2; this interaction is required for PLEKHG4B localization to cell-cell adhesions.

The protein localises to the basal cell membrane. It is found in the cell junction. It localises to the nucleus. The protein resides in the cytoplasm. Its function is as follows. Guanine nucleotide exchange factor (GEF) which specifically activates small GTPase CDC42 by exchanging bound GDP for free GTP. Plays a role in actin cytoskeletal remodeling in the late stage of cell-cell junction formation by regulating the contractility of actin filaments, which prompts the conversion from 'open' to 'closed' junctions. In Homo sapiens (Human), this protein is Pleckstrin homology domain-containing family G member 4B.